A 353-amino-acid chain; its full sequence is Photosystem II D2 protein (353 aa).

Threonine 2 is modified (N-acetylthreonine). At threonine 2 the chain carries Phosphothreonine. A helical transmembrane segment spans residues 41–61; the sequence is CAYFALGGWFTGTTFVTSWYT. Position 118 (histidine 118) interacts with chlorophyll a. The chain crosses the membrane as a helical span at residues 125–141; that stretch reads GFMLRQFELARSVQLRP. Residues glutamine 130 and asparagine 143 each coordinate pheophytin a. A helical membrane pass occupies residues 153–166; it reads VFVSVFLIYPLGQS. Position 198 (histidine 198) interacts with chlorophyll a. Residues 208-228 form a helical membrane-spanning segment; it reads AALLCAIHGATVENTLFEDGD. 2 residues coordinate a plastoquinone: histidine 215 and phenylalanine 262. Position 215 (histidine 215) interacts with Fe cation. Histidine 269 contacts Fe cation. Residues 279-295 form a helical membrane-spanning segment; that stretch reads GLWMSAIGVVGLALNLR.

This sequence belongs to the reaction center PufL/M/PsbA/D family. As to quaternary structure, PSII is composed of 1 copy each of membrane proteins PsbA, PsbB, PsbC, PsbD, PsbE, PsbF, PsbH, PsbI, PsbJ, PsbK, PsbL, PsbM, PsbT, PsbX, PsbY, PsbZ, Psb30/Ycf12, at least 3 peripheral proteins of the oxygen-evolving complex and a large number of cofactors. It forms dimeric complexes. The cofactor is The D1/D2 heterodimer binds P680, chlorophylls that are the primary electron donor of PSII, and subsequent electron acceptors. It shares a non-heme iron and each subunit binds pheophytin, quinone, additional chlorophylls, carotenoids and lipids. There is also a Cl(-1) ion associated with D1 and D2, which is required for oxygen evolution. The PSII complex binds additional chlorophylls, carotenoids and specific lipids..

Its subcellular location is the plastid. The protein localises to the chloroplast thylakoid membrane. The catalysed reaction is 2 a plastoquinone + 4 hnu + 2 H2O = 2 a plastoquinol + O2. In terms of biological role, photosystem II (PSII) is a light-driven water:plastoquinone oxidoreductase that uses light energy to abstract electrons from H(2)O, generating O(2) and a proton gradient subsequently used for ATP formation. It consists of a core antenna complex that captures photons, and an electron transfer chain that converts photonic excitation into a charge separation. The D1/D2 (PsbA/PsbD) reaction center heterodimer binds P680, the primary electron donor of PSII as well as several subsequent electron acceptors. D2 is needed for assembly of a stable PSII complex. The protein is Photosystem II D2 protein of Cycas taitungensis (Prince sago).